Consider the following 505-residue polypeptide: ADP-ribosylarginine hydrolase CG2909 (505 aa).

ADP-D-ribose is bound by residues Arg-198, Gly-336, Gly-338, Gly-340, Val-341, Trp-342, Trp-377, Asp-432, Asn-439, Glu-440, Gly-450, and Asp-451.

It carries out the reaction N(omega)-(ADP-D-ribosyl)-L-arginyl-[protein] + H2O = ADP-D-ribose + L-arginyl-[protein]. The catalysed reaction is N(omega)-(ADP-D-ribosyl)-L-arginine + H2O = ADP-D-ribose + L-arginine. Its function is as follows. Protein ADP-ribosyl hydrolase that specifically removes mono-ADP-ribosyl modifications from protein arginine residues. The polypeptide is ADP-ribosylarginine hydrolase CG2909 (Drosophila melanogaster (Fruit fly)).